Reading from the N-terminus, the 415-residue chain is Putative F-box protein At5g40050 (415 aa).

Residues 13–59 (IDSISPLPDELLSHILSFLPTKRAASTSILSKRWRTLFPLMNHLCAS) form the F-box domain.

The chain is Putative F-box protein At5g40050 from Arabidopsis thaliana (Mouse-ear cress).